Consider the following 343-residue polypeptide: MQEILIPLKEKSYKVFLGELPKIELKQKALIISDSIVAGLHLSYLLKRLKALEVRVCVIESGEKYKNFHSLERILNNAFEMQLNRHSLMIALGGGVISDMVGFASSIYFRGIGFINIPTTLLAQVDASVGGKTGINTPYGKNLIGSFYQPKAVYMDLVFLKTLEKREFQAGVAEIIKMAVCFDKNLVETLETKDLKDCLEEVIFQSVNIKAQVVMQDEKEQNIRAGLNYGHTFGHAIEKETDYERFLHGEAIAIGMRMANDLALSLGMLTLKEYERIENLLKKFDLIFHYKITDIQKFYERLFLDKKSENKTIKFILPKGIGAFEIVSHIPKETILKVLEKWH.

NAD(+) contacts are provided by residues 61–66 (SGEKYK), 95–99 (GVISD), 119–120 (TT), lysine 132, lysine 141, and 159–162 (FLKT). The Zn(2+) site is built by glutamate 174, histidine 231, and histidine 248.

Belongs to the sugar phosphate cyclases superfamily. Dehydroquinate synthase family. It depends on Co(2+) as a cofactor. Zn(2+) serves as cofactor. Requires NAD(+) as cofactor.

The protein resides in the cytoplasm. The catalysed reaction is 7-phospho-2-dehydro-3-deoxy-D-arabino-heptonate = 3-dehydroquinate + phosphate. The protein operates within metabolic intermediate biosynthesis; chorismate biosynthesis; chorismate from D-erythrose 4-phosphate and phosphoenolpyruvate: step 2/7. Functionally, catalyzes the conversion of 3-deoxy-D-arabino-heptulosonate 7-phosphate (DAHP) to dehydroquinate (DHQ). This is 3-dehydroquinate synthase from Helicobacter pylori (strain HPAG1).